Consider the following 138-residue polypeptide: Protein FAM136A (138 aa).

A2 carries the N-acetylalanine modification. Phosphothreonine occurs at positions 124 and 126.

Belongs to the FAM136 family.

In Homo sapiens (Human), this protein is Protein FAM136A (FAM136A).